Here is a 517-residue protein sequence, read N- to C-terminus: Peptide chain release factor 3 (517 aa).

One can recognise a tr-type G domain in the interval 9–269 (AKRRTFAIIS…DFVEHAPAPR (261 aa)). GTP contacts are provided by residues 18–25 (SHPDAGKT), 86–90 (DTPGH), and 140–143 (NKLD).

The protein belongs to the TRAFAC class translation factor GTPase superfamily. Classic translation factor GTPase family. PrfC subfamily.

The protein localises to the cytoplasm. Its function is as follows. Increases the formation of ribosomal termination complexes and stimulates activities of RF-1 and RF-2. It binds guanine nucleotides and has strong preference for UGA stop codons. It may interact directly with the ribosome. The stimulation of RF-1 and RF-2 is significantly reduced by GTP and GDP, but not by GMP. This is Peptide chain release factor 3 from Halorhodospira halophila (strain DSM 244 / SL1) (Ectothiorhodospira halophila (strain DSM 244 / SL1)).